The sequence spans 503 residues: Basic immunoglobulin-like variable motif-containing protein (503 aa).

Basic and acidic residues predominate over residues 1–26 (MPNVAETERSNDSGNGEHKSERKSPE). Disordered regions lie at residues 1 to 33 (MPNVAETERSNDSGNGEHKSERKSPEENLQGAV), 152 to 184 (TTNSKHKSGNAKKQVSKRKTSDKKGRYQKECPQ), and 438 to 469 (ESQPPTHAQGIAKSESEDNISKKQHGRLGRSF). Over residues 155–172 (SKHKSGNAKKQVSKRKTS) the composition is skewed to basic residues. A compositionally biased stretch (basic and acidic residues) spans 173–184 (DKKGRYQKECPQ).

It belongs to the BIVM family. In terms of tissue distribution, widely expressed. Expressed at higher level in spleen, ovary, small intestine, colon, peripheral blood leukocytes and liver. Also expressed in testis, ovary, aorta, appendix, trachea, pituitary gland, bladder, uterus, spinal cord, salivary gland, stomach, mammary gland and bone marrow. Weakly or not expressed in fetal spleen, adult thymus and certain cancer cell lines.

The protein localises to the cytoplasm. The protein resides in the nucleus. The protein is Basic immunoglobulin-like variable motif-containing protein (BIVM) of Homo sapiens (Human).